We begin with the raw amino-acid sequence, 444 residues long: Exodeoxyribonuclease 7 large subunit (444 aa).

This sequence belongs to the XseA family. As to quaternary structure, heterooligomer composed of large and small subunits.

It is found in the cytoplasm. The enzyme catalyses Exonucleolytic cleavage in either 5'- to 3'- or 3'- to 5'-direction to yield nucleoside 5'-phosphates.. Bidirectionally degrades single-stranded DNA into large acid-insoluble oligonucleotides, which are then degraded further into small acid-soluble oligonucleotides. In Pseudoalteromonas translucida (strain TAC 125), this protein is Exodeoxyribonuclease 7 large subunit.